We begin with the raw amino-acid sequence, 207 residues long: Histidine biosynthesis bifunctional protein HisIE (207 aa).

Positions 1-117 (MQNFKELNEK…KISKNADFVF (117 aa)) are phosphoribosyl-AMP cyclohydrolase. The segment at 118-207 (LARLEKLINA…ISKLKERHKA (90 aa)) is phosphoribosyl-ATP pyrophosphohydrolase.

In the N-terminal section; belongs to the PRA-CH family. The protein in the C-terminal section; belongs to the PRA-PH family.

It is found in the cytoplasm. It carries out the reaction 1-(5-phospho-beta-D-ribosyl)-ATP + H2O = 1-(5-phospho-beta-D-ribosyl)-5'-AMP + diphosphate + H(+). It catalyses the reaction 1-(5-phospho-beta-D-ribosyl)-5'-AMP + H2O = 1-(5-phospho-beta-D-ribosyl)-5-[(5-phospho-beta-D-ribosylamino)methylideneamino]imidazole-4-carboxamide. It participates in amino-acid biosynthesis; L-histidine biosynthesis; L-histidine from 5-phospho-alpha-D-ribose 1-diphosphate: step 2/9. It functions in the pathway amino-acid biosynthesis; L-histidine biosynthesis; L-histidine from 5-phospho-alpha-D-ribose 1-diphosphate: step 3/9. This chain is Histidine biosynthesis bifunctional protein HisIE (hisI), found in Campylobacter jejuni subsp. jejuni serotype O:2 (strain ATCC 700819 / NCTC 11168).